Here is a 105-residue protein sequence, read N- to C-terminus: DNA-directed RNA polymerase subunit omega (105 aa).

It belongs to the RNA polymerase subunit omega family. As to quaternary structure, the RNAP catalytic core consists of 2 alpha, 1 beta, 1 beta' and 1 omega subunit. When a sigma factor is associated with the core the holoenzyme is formed, which can initiate transcription.

It carries out the reaction RNA(n) + a ribonucleoside 5'-triphosphate = RNA(n+1) + diphosphate. Promotes RNA polymerase assembly. Latches the N- and C-terminal regions of the beta' subunit thereby facilitating its interaction with the beta and alpha subunits. The chain is DNA-directed RNA polymerase subunit omega from Streptococcus pyogenes serotype M12 (strain MGAS2096).